The primary structure comprises 98 residues: DNA-binding protein Fis (98 aa).

Residues 74–93 (QTRAALMMGINRGTLRKKLK) constitute a DNA-binding region (H-T-H motif).

It belongs to the transcriptional regulatory Fis family. In terms of assembly, homodimer.

Its function is as follows. Activates ribosomal RNA transcription. Plays a direct role in upstream activation of rRNA promoters. This Photorhabdus laumondii subsp. laumondii (strain DSM 15139 / CIP 105565 / TT01) (Photorhabdus luminescens subsp. laumondii) protein is DNA-binding protein Fis.